The chain runs to 508 residues: MDPFPDLYATPGDSLDHFLEHSLQPQRDWKEEGQDAWERIERFFREQCFRDELLLDQEVRVIKVVKGGSSGKGTTLNHRSDQDMILFLSCFSSFEEQARNREVVISFIKKRLIHCSRSLAYNIIVLTHREGKRAPRSLTLKVQSRKTDDIIWMDILPAYDALGPISRDSKPAPAIYETLIRSKGYPGDFSPSFTELQRHFVKTRPVKLKNLLRLVKFWYLQCLRRKYGRGAVLPSKYALELLTIYAWEMGTESSDSFNLDEGFVAVMELLVNYRDICIYWTKYYNFQNEVVRNFLKKQLKGDRPIILDPADPTNNLGRRKGWEQVAAEAAFCLLQVCCTTVGPSERWNVQRARDVQVRVKQTGTVDWTLWTNPYSPIRKMKAEIRREKNFGGELRISFQEPGGERQLLSSRKTLADYGIFSKVNIQVLETFPPEILVFVKYPGGQSKPFTIDPDDTILDLKEKIEDAGGPCAEDQVLLLDDEELEDDESLKELEIKDCDTIILIRVID.

Ser-69 contacts ATP. The Mg(2+) site is built by Asp-81, Asp-83, and Asp-154. Positions 213 and 216 each coordinate ATP. The Ubiquitin-like domain maps to 435–473; the sequence is ILVFVKYPGGQSKPFTIDPDDTILDLKEKIEDAGGPCAE.

This sequence belongs to the 2-5A synthase family. Mg(2+) is required as a cofactor. As to expression, strongly expressed in spleen dendritic cells, whereas, in bone marrow-derived dendritic cells, the amount increases during the maturation process. Expressed in many organs, the highest levels being in thymus, lung, and bone marrow.

It carries out the reaction 3 ATP = 5'-triphosphoadenylyl-(2'-&gt;5')-adenylyl-(2'-&gt;5')-adenosine + 2 diphosphate. Its activity is regulated as follows. Produced as a latent enzyme which is activated by dsRNA generated during the course of viral infection. The dsRNA activator must be at least 15 nucleotides long, and no modification of the 2'-hydroxyl group is tolerated. ssRNA or dsDNA do not act as activators. Functionally, interferon-induced, dsRNA-activated antiviral enzyme which plays a critical role in cellular innate antiviral response. Synthesizes oligomers of 2'-5'-oligoadenylates (2-5A) from ATP which then bind to the inactive monomeric form of ribonuclease L (RNase L) leading to its dimerization and subsequent activation. Activation of RNase L leads to degradation of cellular as well as viral RNA, resulting in the inhibition of protein synthesis, thus terminating viral replication. Can mediate the antiviral effect via the classical RNase L-dependent pathway or an alternative antiviral pathway independent of RNase L. This is 2'-5'-oligoadenylate synthase-like protein 2 (Oasl2) from Mus musculus (Mouse).